The sequence spans 295 residues: Tyrosine recombinase XerC (295 aa).

Positions 1-84 (MTLEEQFLSY…SLKSFYRFLT (84 aa)) constitute a Core-binding (CB) domain. The 185-residue stretch at 105 to 289 (KLPEFFYQDE…SMQHLTVEYR (185 aa)) folds into the Tyr recombinase domain. Residues Arg145, Lys169, His241, Arg244, and His267 contribute to the active site. Tyr276 serves as the catalytic O-(3'-phospho-DNA)-tyrosine intermediate.

The protein belongs to the 'phage' integrase family. XerC subfamily. Forms a cyclic heterotetrameric complex composed of two molecules of XerC and two molecules of XerD.

It is found in the cytoplasm. In terms of biological role, site-specific tyrosine recombinase, which acts by catalyzing the cutting and rejoining of the recombining DNA molecules. The XerC-XerD complex is essential to convert dimers of the bacterial chromosome into monomers to permit their segregation at cell division. It also contributes to the segregational stability of plasmids. The protein is Tyrosine recombinase XerC of Lactobacillus delbrueckii subsp. bulgaricus (strain ATCC 11842 / DSM 20081 / BCRC 10696 / JCM 1002 / NBRC 13953 / NCIMB 11778 / NCTC 12712 / WDCM 00102 / Lb 14).